A 145-amino-acid chain; its full sequence is Large ribosomal subunit protein uL15 (145 aa).

Basic residues predominate over residues 1-30 (MAHSLRKTRKLRGHVSHGHGRIGKHRKHPG). Positions 1 to 48 (MAHSLRKTRKLRGHVSHGHGRIGKHRKHPGGRGNAGGQHHHRINRDKY) are disordered.

This sequence belongs to the universal ribosomal protein uL15 family. In terms of assembly, component of the large ribosomal subunit.

The protein localises to the cytoplasm. Its subcellular location is the cytosol. It localises to the rough endoplasmic reticulum. Component of the large ribosomal subunit. In Oscheius tipulae, this protein is Large ribosomal subunit protein uL15 (rpl-27a).